The primary structure comprises 335 residues: ADP-L-glycero-D-manno-heptose-6-epimerase (335 aa).

Residues 11-12 (FI), 32-33 (DD), K39, 75-79 (EGACS), and N92 each bind NADP(+). Y139 (proton acceptor) is an active-site residue. K143 is an NADP(+) binding site. N172 contacts substrate. NADP(+) contacts are provided by V173 and K181. K181 acts as the Proton acceptor in catalysis. Substrate contacts are provided by residues R183, H190, 204 to 207 (FGDY), R217, and Y296.

Belongs to the NAD(P)-dependent epimerase/dehydratase family. HldD subfamily. Homopentamer. The cofactor is NADP(+).

It catalyses the reaction ADP-D-glycero-beta-D-manno-heptose = ADP-L-glycero-beta-D-manno-heptose. Its pathway is nucleotide-sugar biosynthesis; ADP-L-glycero-beta-D-manno-heptose biosynthesis; ADP-L-glycero-beta-D-manno-heptose from D-glycero-beta-D-manno-heptose 7-phosphate: step 4/4. In terms of biological role, catalyzes the interconversion between ADP-D-glycero-beta-D-manno-heptose and ADP-L-glycero-beta-D-manno-heptose via an epimerization at carbon 6 of the heptose. The polypeptide is ADP-L-glycero-D-manno-heptose-6-epimerase (Polaromonas naphthalenivorans (strain CJ2)).